The sequence spans 712 residues: Polyribonucleotide nucleotidyltransferase (712 aa).

Mg(2+) is bound by residues D487 and D493. Residues 554–613 (PKIITMTINPDKIRDVIGPSGKQINKIIEETGVKIDIEQDGTVFISSINQEMNDKAKKII) enclose the KH domain. Residues 623–691 (GEIYEGKVKR…KQGRVNLSRK (69 aa)) form the S1 motif domain.

This sequence belongs to the polyribonucleotide nucleotidyltransferase family. Mg(2+) serves as cofactor.

Its subcellular location is the cytoplasm. It carries out the reaction RNA(n+1) + phosphate = RNA(n) + a ribonucleoside 5'-diphosphate. Involved in mRNA degradation. Catalyzes the phosphorolysis of single-stranded polyribonucleotides processively in the 3'- to 5'-direction. This is Polyribonucleotide nucleotidyltransferase from Bacillus anthracis.